We begin with the raw amino-acid sequence, 102 residues long: Small ribosomal subunit protein uS10 (102 aa).

Belongs to the universal ribosomal protein uS10 family. Part of the 30S ribosomal subunit.

Functionally, involved in the binding of tRNA to the ribosomes. This chain is Small ribosomal subunit protein uS10, found in Streptococcus pneumoniae (strain Taiwan19F-14).